A 329-amino-acid polypeptide reads, in one-letter code: METLFSGIQPSGIPTIGNYIGALKQFVDVQDDYECFFCIVDQHAITVPQDRLKLRKQIRQLAAIYLASGIDPDKSTLFIQSEVPAHVQAGWMLTTIASIGELERMTQFKDKAQKRADGVPAGLLTYPPLMAADIVIYNTNIVPVGDDQKQHMELTRNLVDRFNSRYNDVLVKPEVRMPKVGGRVMSLQDPTKKMSKSDDNQKNFISLLDEPHVAAKKIKSAVTDSDGIIKFDRENKPGISNLLSIYSGLTNDSIKNIESKYEGEGYGKFKGDLSEIVKDFLINFQEKYASFYNSDDLDDILDKGKEKAQKASFKTLKKMEKAMGLGRKR.

ATP contacts are provided by residues 9–11 (QPS) and 17–18 (GN). The short motif at 10-18 (PSGIPTIGN) is the 'HIGH' region element. Aspartate 133 provides a ligand contact to L-tryptophan. Residues 145–147 (GDD), valine 184, and 193–197 (KMSKS) contribute to the ATP site. The short motif at 193 to 197 (KMSKS) is the 'KMSKS' region element.

It belongs to the class-I aminoacyl-tRNA synthetase family. In terms of assembly, homodimer.

It localises to the cytoplasm. The enzyme catalyses tRNA(Trp) + L-tryptophan + ATP = L-tryptophyl-tRNA(Trp) + AMP + diphosphate + H(+). Functionally, catalyzes the attachment of tryptophan to tRNA(Trp). The chain is Tryptophan--tRNA ligase from Staphylococcus epidermidis (strain ATCC 35984 / DSM 28319 / BCRC 17069 / CCUG 31568 / BM 3577 / RP62A).